We begin with the raw amino-acid sequence, 708 residues long: Elongation factor G (708 aa).

The 283-residue stretch at Lys8 to Met290 folds into the tr-type G domain. GTP is bound by residues Ala17–Thr24, Asp88–His92, and Asn142–Asp145.

The protein belongs to the TRAFAC class translation factor GTPase superfamily. Classic translation factor GTPase family. EF-G/EF-2 subfamily.

It localises to the cytoplasm. In terms of biological role, catalyzes the GTP-dependent ribosomal translocation step during translation elongation. During this step, the ribosome changes from the pre-translocational (PRE) to the post-translocational (POST) state as the newly formed A-site-bound peptidyl-tRNA and P-site-bound deacylated tRNA move to the P and E sites, respectively. Catalyzes the coordinated movement of the two tRNA molecules, the mRNA and conformational changes in the ribosome. This is Elongation factor G from Psychrobacter arcticus (strain DSM 17307 / VKM B-2377 / 273-4).